A 101-amino-acid chain; its full sequence is Small ribosomal subunit protein uS14 (101 aa).

The protein belongs to the universal ribosomal protein uS14 family. As to quaternary structure, part of the 30S ribosomal subunit. Contacts proteins S3 and S10.

Functionally, binds 16S rRNA, required for the assembly of 30S particles and may also be responsible for determining the conformation of the 16S rRNA at the A site. The polypeptide is Small ribosomal subunit protein uS14 (Polynucleobacter asymbioticus (strain DSM 18221 / CIP 109841 / QLW-P1DMWA-1) (Polynucleobacter necessarius subsp. asymbioticus)).